The chain runs to 184 residues: GTP cyclohydrolase 1 (184 aa).

The Zn(2+) site is built by C74, H77, and C145.

Belongs to the GTP cyclohydrolase I family. Toroid-shaped homodecamer, composed of two pentamers of five dimers.

It catalyses the reaction GTP + H2O = 7,8-dihydroneopterin 3'-triphosphate + formate + H(+). The protein operates within cofactor biosynthesis; 7,8-dihydroneopterin triphosphate biosynthesis; 7,8-dihydroneopterin triphosphate from GTP: step 1/1. This Aquifex aeolicus (strain VF5) protein is GTP cyclohydrolase 1 (folE).